Consider the following 138-residue polypeptide: Altered inheritance of mitochondria protein 11 (138 aa).

2 helical membrane passes run 17–34 (ARFY…RLIS) and 67–89 (LTYA…CWAL).

This sequence belongs to the AIM11 family.

The protein localises to the membrane. The polypeptide is Altered inheritance of mitochondria protein 11 (AIM11) (Saccharomyces cerevisiae (strain JAY291) (Baker's yeast)).